The sequence spans 125 residues: Large ribosomal subunit protein uL18 (125 aa).

Gly-2 carries the post-translational modification N-acetylglycine. N6-acetyllysine is present on residues Lys-5 and Lys-48.

Belongs to the universal ribosomal protein uL18 family. In terms of assembly, component of the large ribosomal subunit (LSU). Part of the 5S RNP complex, which is a LSU subcomplex composed of the 5S RNA, RPL5 and RPL11. Component of a hexameric 5S RNP precursor complex, composed of 5S RNA, RRS1, RPF2/BXDC1, RPL5, RPL11 and HEATR3; this complex acts as a precursor for ribosome assembly. Interacts with NVL in an ATP-dependent manner. Interacts with RRP1B. Interacts with IPO5, IPO7 and KPNB1; these interactions may be involved in RPL5 nuclear import for the assembly of ribosomal subunits. Interacts with RRP1B.

It is found in the cytoplasm. The protein resides in the nucleus. It localises to the nucleolus. Component of the ribosome, a large ribonucleoprotein complex responsible for the synthesis of proteins in the cell. The small ribosomal subunit (SSU) binds messenger RNAs (mRNAs) and translates the encoded message by selecting cognate aminoacyl-transfer RNA (tRNA) molecules. The large subunit (LSU) contains the ribosomal catalytic site termed the peptidyl transferase center (PTC), which catalyzes the formation of peptide bonds, thereby polymerizing the amino acids delivered by tRNAs into a polypeptide chain. The nascent polypeptides leave the ribosome through a tunnel in the LSU and interact with protein factors that function in enzymatic processing, targeting, and the membrane insertion of nascent chains at the exit of the ribosomal tunnel. As part of the 5S RNP/5S ribonucleoprotein particle it is an essential component of the LSU, required for its formation and the maturation of rRNAs. It also couples ribosome biogenesis to p53/TP53 activation. As part of the 5S RNP it accumulates in the nucleoplasm and inhibits MDM2, when ribosome biogenesis is perturbed, mediating the stabilization and the activation of TP53. The sequence is that of Large ribosomal subunit protein uL18 (RPL5) from Sus scrofa (Pig).